Reading from the N-terminus, the 936-residue chain is MEEYFNKTGYLFSGNAVFVEELYRQYLANPNSVDQTWQEFFADIKDNNVVLNKSTAKVISTNVTNKELLNNNLSSETLNNLKAKEMISAYRRNAHYLANLDPLGLEIRKTKNDLKLNIEAFGLDSSQLGENINIMDEFIGTWNCKLSELVTKLDKVYTSSIGVEFDQIENVEEKNWLYTKLETDITFTSEEKKSILNDLVEVECFEQFLHIKFPGAKRFSIEGGDASIVAMNKAIDLSMHQGVEEIVIGMAHRGRLNTLTKVVGKPYKEVIASFINGNIFPDGLNVSGDVKYHLGYSADRVRANQKIHLSLADNPSHLEAINSIVAGKVRAKQDIFVDTKRSKIKAILVHGDAAFCGQGVVAESLSMSPLTAYNVGGILHFVINNQLGFTANAADTRASRYSTEFAKIISAPILHVNGDDIEAVLKATDIAVEYRQKFSKDVVVEIICYRKYGHNEGDEPMYTQSKMYNIIKSKPTPGSIYANELVKNGIIDNNYYAKLKEKFKIRLDQEYEQAKSYKQETHFFEGYWKGISRIRGKDAITGVNKKILQDLGTKLCEIPKDFAINPKLIRLFEVRKTTLTTDQPIDWATAEQLAFAHLLCSGINIRLTGQDSARGTFSHRHSILHNQIDDTTYIPLNNLSKTQAKYEVANSNLSEYAALGFEYGYSLANPKNLVLWEAQFGDFANGAQIIFDQFISSSATKWLRMSGLVVLLPHAFEGQGPEHSSARLERFLQLAAEENMYITYPTTPASIFHLLRRQILESTRKPLIVMSPKSLLRHKYAVSKLDELGENTTFIPILDEVTKIDTNNVTKVILCSGKVYYDLFAMRTNNSNIVIIRLEQLYPFEKKLVASLLKKYNKAQAFIWCQEEPKNMGAWHYIATHLNDALKEAEINNEFKYVGREESASPAVGSLQVHNKQQEKLLMEALGDDIIKEKLY.

This sequence belongs to the alpha-ketoglutarate dehydrogenase family. In terms of assembly, homodimer. Part of the 2-oxoglutarate dehydrogenase (OGDH) complex composed of E1 (2-oxoglutarate dehydrogenase), E2 (dihydrolipoamide succinyltransferase) and E3 (dihydrolipoamide dehydrogenase); the complex contains multiple copies of the three enzymatic components (E1, E2 and E3). The cofactor is thiamine diphosphate.

It catalyses the reaction N(6)-[(R)-lipoyl]-L-lysyl-[protein] + 2-oxoglutarate + H(+) = N(6)-[(R)-S(8)-succinyldihydrolipoyl]-L-lysyl-[protein] + CO2. Functionally, E1 component of the 2-oxoglutarate dehydrogenase (OGDH) complex which catalyzes the decarboxylation of 2-oxoglutarate, the first step in the conversion of 2-oxoglutarate to succinyl-CoA and CO(2). The sequence is that of 2-oxoglutarate dehydrogenase E1 component (sucA) from Rickettsia prowazekii (strain Madrid E).